Here is a 246-residue protein sequence, read N- to C-terminus: Uridylate kinase (246 aa).

Residue 10 to 13 participates in ATP binding; the sequence is KLSG. Gly-52 is a binding site for UMP. ATP-binding residues include Gly-53 and Arg-57. Residues Asp-72 and 133–140 contribute to the UMP site; that span reads TGNPFFTT. ATP-binding residues include Thr-160, Tyr-166, and Asp-169.

This sequence belongs to the UMP kinase family. Homohexamer.

It is found in the cytoplasm. It carries out the reaction UMP + ATP = UDP + ADP. Its pathway is pyrimidine metabolism; CTP biosynthesis via de novo pathway; UDP from UMP (UMPK route): step 1/1. Inhibited by UTP. Its function is as follows. Catalyzes the reversible phosphorylation of UMP to UDP. The sequence is that of Uridylate kinase from Halorhodospira halophila (strain DSM 244 / SL1) (Ectothiorhodospira halophila (strain DSM 244 / SL1)).